We begin with the raw amino-acid sequence, 427 residues long: MSRSETLFANAQKHIPGGVNSPVRAFKSVGGTPLFFKHAAGAYVTDEDDKRYVDYVGSWGPMILGHSHPEVLDAVRSQLEHGLSYGAPTAMETEMADLVCALVPSMEMVRMVSSGTEATMSAIRLARGFTGRDSIIKFEGCYHGHSDSLLVKAGSGALTLGVPSSPGVPAAFAKHTLTVPFNNLDAVRDLLAEVGQEVACIIVEPVAGNMNCVPPAPGYLQGLRDLCDEHGVVLIFDEVMTGFRVALGGAQAYYGVTPDLSTFGKIIGGGMPVGCFGGKREIMSHIAPLGPVYQAGTLSGNPLAMAAGLTTLRLISRPGFHDELSDYTRRLLEGLQQRADAAGIAFVTTQAGGMFGLYFSEAREIVTFEDVMTSDAERFKRFFHLMLEGGVYLAPSAFEAGFTSIAHGDAELKLTLDAAEKAFAALK.

Residue Lys-265 is modified to N6-(pyridoxal phosphate)lysine.

Belongs to the class-III pyridoxal-phosphate-dependent aminotransferase family. HemL subfamily. As to quaternary structure, homodimer. Pyridoxal 5'-phosphate serves as cofactor.

The protein resides in the cytoplasm. The catalysed reaction is (S)-4-amino-5-oxopentanoate = 5-aminolevulinate. The protein operates within porphyrin-containing compound metabolism; protoporphyrin-IX biosynthesis; 5-aminolevulinate from L-glutamyl-tRNA(Glu): step 2/2. This Pseudomonas savastanoi pv. phaseolicola (strain 1448A / Race 6) (Pseudomonas syringae pv. phaseolicola (strain 1448A / Race 6)) protein is Glutamate-1-semialdehyde 2,1-aminomutase.